The chain runs to 333 residues: Tetraacyldisaccharide 4'-kinase (333 aa).

55 to 62 (TAGGNGKT) contributes to the ATP binding site.

This sequence belongs to the LpxK family.

The catalysed reaction is a lipid A disaccharide + ATP = a lipid IVA + ADP + H(+). Its pathway is glycolipid biosynthesis; lipid IV(A) biosynthesis; lipid IV(A) from (3R)-3-hydroxytetradecanoyl-[acyl-carrier-protein] and UDP-N-acetyl-alpha-D-glucosamine: step 6/6. Functionally, transfers the gamma-phosphate of ATP to the 4'-position of a tetraacyldisaccharide 1-phosphate intermediate (termed DS-1-P) to form tetraacyldisaccharide 1,4'-bis-phosphate (lipid IVA). In Proteus mirabilis (strain HI4320), this protein is Tetraacyldisaccharide 4'-kinase.